The primary structure comprises 243 residues: Pyridoxine 5'-phosphate synthase (243 aa).

Asparagine 9 provides a ligand contact to 3-amino-2-oxopropyl phosphate. Aspartate 11–histidine 12 contacts 1-deoxy-D-xylulose 5-phosphate. 3-amino-2-oxopropyl phosphate is bound at residue arginine 20. Histidine 45 acts as the Proton acceptor in catalysis. Arginine 47 and histidine 52 together coordinate 1-deoxy-D-xylulose 5-phosphate. Glutamate 72 functions as the Proton acceptor in the catalytic mechanism. A 1-deoxy-D-xylulose 5-phosphate-binding site is contributed by threonine 102. The active-site Proton donor is the histidine 193. 3-amino-2-oxopropyl phosphate contacts are provided by residues glycine 194 and glycine 215 to histidine 216.

This sequence belongs to the PNP synthase family. In terms of assembly, homooctamer; tetramer of dimers.

Its subcellular location is the cytoplasm. It carries out the reaction 3-amino-2-oxopropyl phosphate + 1-deoxy-D-xylulose 5-phosphate = pyridoxine 5'-phosphate + phosphate + 2 H2O + H(+). Its pathway is cofactor biosynthesis; pyridoxine 5'-phosphate biosynthesis; pyridoxine 5'-phosphate from D-erythrose 4-phosphate: step 5/5. In terms of biological role, catalyzes the complicated ring closure reaction between the two acyclic compounds 1-deoxy-D-xylulose-5-phosphate (DXP) and 3-amino-2-oxopropyl phosphate (1-amino-acetone-3-phosphate or AAP) to form pyridoxine 5'-phosphate (PNP) and inorganic phosphate. This chain is Pyridoxine 5'-phosphate synthase, found in Vibrio parahaemolyticus serotype O3:K6 (strain RIMD 2210633).